The sequence spans 559 residues: Asparagine--tRNA ligase, cytoplasmic (559 aa).

Ser-72 is modified (phosphoserine). The disordered stretch occupies residues 82–102 (HREQMKNDSREKKEAEDNLRR). Lys-255 carries the N6-acetyllysine modification. Ser-493 is modified (phosphoserine). Lys-501 carries the N6-acetyllysine modification.

This sequence belongs to the class-II aminoacyl-tRNA synthetase family. In terms of assembly, homodimer.

It is found in the cytoplasm. It carries out the reaction tRNA(Asn) + L-asparagine + ATP = L-asparaginyl-tRNA(Asn) + AMP + diphosphate + H(+). Catalyzes the attachment of asparagine to tRNA(Asn) in a two-step reaction: asparagine is first activated by ATP to form Asn-AMP and then transferred to the acceptor end of tRNA(Asn). In addition to its essential role in protein synthesis, acts as a signaling molecule that induced migration of CCR3-expressing cells. Has an essential role in the development of the cerebral cortex, being required for proper proliferation of radial glial cells. In Mus musculus (Mouse), this protein is Asparagine--tRNA ligase, cytoplasmic.